A 292-amino-acid chain; its full sequence is NAD kinase (292 aa).

Catalysis depends on aspartate 73, which acts as the Proton acceptor. NAD(+) is bound by residues 73-74 (DG), 147-148 (NE), histidine 158, arginine 175, aspartate 177, 188-193 (TAYSLS), and glutamine 247.

Belongs to the NAD kinase family. The cofactor is a divalent metal cation.

The protein localises to the cytoplasm. It catalyses the reaction NAD(+) + ATP = ADP + NADP(+) + H(+). Functionally, involved in the regulation of the intracellular balance of NAD and NADP, and is a key enzyme in the biosynthesis of NADP. Catalyzes specifically the phosphorylation on 2'-hydroxyl of the adenosine moiety of NAD to yield NADP. This is NAD kinase from Shigella boydii serotype 4 (strain Sb227).